The primary structure comprises 543 residues: Glutamyl-tRNA(Gln) amidotransferase subunit B-1, chloroplastic/mitochondrial (543 aa).

Residues 1–47 form a disordered region; that stretch reads MIRAGGPSPSPRGRRAGPIRLPRRAPSSTPTRAKTEEKASADASSRT. Residues 12–23 show a composition bias toward basic residues; the sequence is RGRRAGPIRLPR.

It belongs to the GatB/GatE family. GatB subfamily. In terms of assembly, subunit of the heterotrimeric GatCAB amidotransferase (AdT) complex, composed of A, B and C subunits.

The protein localises to the mitochondrion. Its subcellular location is the plastid. It is found in the chloroplast. It catalyses the reaction L-glutamyl-tRNA(Gln) + L-glutamine + ATP + H2O = L-glutaminyl-tRNA(Gln) + L-glutamate + ADP + phosphate + H(+). Functionally, allows the formation of correctly charged Gln-tRNA(Gln) through the transamidation of misacylated Glu-tRNA(Gln) in chloroplasts and mitochondria. The reaction takes place in the presence of glutamine and ATP through an activated gamma-phospho-Glu-tRNA(Gln). In Micromonas commoda (strain RCC299 / NOUM17 / CCMP2709) (Picoplanktonic green alga), this protein is Glutamyl-tRNA(Gln) amidotransferase subunit B-1, chloroplastic/mitochondrial.